We begin with the raw amino-acid sequence, 562 residues long: Ycf55-like protein (562 aa).

In terms of domain architecture, Response regulatory spans threonine 7–histidine 125.

Belongs to the ycf55 family.

The chain is Ycf55-like protein from Synechocystis sp. (strain ATCC 27184 / PCC 6803 / Kazusa).